Reading from the N-terminus, the 92-residue chain is MARSVWKGPFVDGYLLTKAEKVRESGRNEVIKIWSRRSTILPQFVGLTFGVYNGSKHVPVSVNEDMVGHKFGEFSPTRTYYGHGADKKAKRK.

The protein belongs to the universal ribosomal protein uS19 family.

Protein S19 forms a complex with S13 that binds strongly to the 16S ribosomal RNA. The polypeptide is Small ribosomal subunit protein uS19 (Agrobacterium fabrum (strain C58 / ATCC 33970) (Agrobacterium tumefaciens (strain C58))).